The sequence spans 147 residues: Mitochondrial import receptor subunit TOM20 homolog (147 aa).

Topologically, residues 1–3 are mitochondrial intermembrane; it reads MVA. A helical transmembrane segment spans residues 4-26; it reads VGKTSAIAAGVCGALLLGYCIYF. Residues 27-147 are Cytoplasmic-facing; the sequence is DRKRRSDPNF…AQNLSEDDVE (121 aa).

The protein belongs to the Tom20 family. Forms part of the preprotein translocase complex of the outer mitochondrial membrane (TOM complex). Interacts with tom22.

The protein resides in the mitochondrion outer membrane. In terms of biological role, central component of the receptor complex responsible for the recognition and translocation of cytosolically synthesized mitochondrial preproteins. Together with tom22 functions as the transit peptide receptor at the surface of the mitochondrion outer membrane and facilitates the movement of preproteins into the tom40 translocation pore. The chain is Mitochondrial import receptor subunit TOM20 homolog (tomm20) from Xenopus laevis (African clawed frog).